The following is a 268-amino-acid chain: Endonuclease 8 1 (268 aa).

P2 serves as the catalytic Schiff-base intermediate with DNA. E3 acts as the Proton donor in catalysis. The active-site Proton donor; for beta-elimination activity is K52. 2 residues coordinate DNA: R125 and N166. Residues 234–268 form an FPG-type zinc finger; it reads YVYRRAGEPCRVCGGVIRTALLEGRNVFWCPVCQT. Residue R258 is the Proton donor; for delta-elimination activity of the active site.

It belongs to the FPG family. Zn(2+) serves as cofactor.

The enzyme catalyses 2'-deoxyribonucleotide-(2'-deoxyribose 5'-phosphate)-2'-deoxyribonucleotide-DNA = a 3'-end 2'-deoxyribonucleotide-(2,3-dehydro-2,3-deoxyribose 5'-phosphate)-DNA + a 5'-end 5'-phospho-2'-deoxyribonucleoside-DNA + H(+). Functionally, involved in base excision repair of DNA damaged by oxidation or by mutagenic agents. Acts as a DNA glycosylase that recognizes and removes damaged bases. Has AP (apurinic/apyrimidinic) lyase activity and introduces nicks in the DNA strand. Cleaves the DNA backbone by beta-delta elimination to generate a single-strand break at the site of the removed base with both 3'- and 5'-phosphates. The sequence is that of Endonuclease 8 1 (nei1) from Mycobacterium bovis (strain ATCC BAA-935 / AF2122/97).